The primary structure comprises 248 residues: Peptidyl-tRNA hydrolase (248 aa).

Y14 serves as a coordination point for tRNA. H19 (proton acceptor) is an active-site residue. F64, N66, and N112 together coordinate tRNA. Residues 190–248 are disordered; that stretch reads PRSSTGEASKGRKKAQKSEPGVAKTPAKAATPEAPAAGDIPAAPEDSRSPMQKLLDKFK. Over residues 212–226 the composition is skewed to low complexity; the sequence is AKTPAKAATPEAPAA.

Belongs to the PTH family. Monomer.

It localises to the cytoplasm. The enzyme catalyses an N-acyl-L-alpha-aminoacyl-tRNA + H2O = an N-acyl-L-amino acid + a tRNA + H(+). In terms of biological role, hydrolyzes ribosome-free peptidyl-tRNAs (with 1 or more amino acids incorporated), which drop off the ribosome during protein synthesis, or as a result of ribosome stalling. Functionally, catalyzes the release of premature peptidyl moieties from peptidyl-tRNA molecules trapped in stalled 50S ribosomal subunits, and thus maintains levels of free tRNAs and 50S ribosomes. This Ruegeria sp. (strain TM1040) (Silicibacter sp.) protein is Peptidyl-tRNA hydrolase.